The following is a 373-amino-acid chain: Histidinol-phosphate aminotransferase (373 aa).

Lys-233 bears the N6-(pyridoxal phosphate)lysine mark.

It belongs to the class-II pyridoxal-phosphate-dependent aminotransferase family. Histidinol-phosphate aminotransferase subfamily. As to quaternary structure, homodimer. It depends on pyridoxal 5'-phosphate as a cofactor.

It carries out the reaction L-histidinol phosphate + 2-oxoglutarate = 3-(imidazol-4-yl)-2-oxopropyl phosphate + L-glutamate. It functions in the pathway amino-acid biosynthesis; L-histidine biosynthesis; L-histidine from 5-phospho-alpha-D-ribose 1-diphosphate: step 7/9. This is Histidinol-phosphate aminotransferase from Nitratidesulfovibrio vulgaris (strain ATCC 29579 / DSM 644 / CCUG 34227 / NCIMB 8303 / VKM B-1760 / Hildenborough) (Desulfovibrio vulgaris).